The primary structure comprises 276 residues: NAD kinase (276 aa).

Catalysis depends on Asp-67, which acts as the Proton acceptor. Residues 67 to 68, Arg-72, 136 to 137, Lys-147, Arg-164, Asp-166, 177 to 182, Ala-201, and Gln-235 each bind NAD(+); these read DG, ND, and TAYALS.

Belongs to the NAD kinase family. A divalent metal cation serves as cofactor.

It localises to the cytoplasm. It carries out the reaction NAD(+) + ATP = ADP + NADP(+) + H(+). Involved in the regulation of the intracellular balance of NAD and NADP, and is a key enzyme in the biosynthesis of NADP. Catalyzes specifically the phosphorylation on 2'-hydroxyl of the adenosine moiety of NAD to yield NADP. The protein is NAD kinase of Thermococcus sibiricus (strain DSM 12597 / MM 739).